The primary structure comprises 250 residues: 2,3-bisphosphoglycerate-dependent phosphoglycerate mutase (250 aa).

Substrate contacts are provided by residues 10–17 (RHGESEWN), 23–24 (TG), Arg62, 89–92 (ERHY), Lys100, 116–117 (RR), and 185–186 (GN). His11 acts as the Tele-phosphohistidine intermediate in catalysis. The active-site Proton donor/acceptor is the Glu89.

It belongs to the phosphoglycerate mutase family. BPG-dependent PGAM subfamily. Homodimer.

The catalysed reaction is (2R)-2-phosphoglycerate = (2R)-3-phosphoglycerate. Its pathway is carbohydrate degradation; glycolysis; pyruvate from D-glyceraldehyde 3-phosphate: step 3/5. Functionally, catalyzes the interconversion of 2-phosphoglycerate and 3-phosphoglycerate. This Edwardsiella ictaluri (strain 93-146) protein is 2,3-bisphosphoglycerate-dependent phosphoglycerate mutase.